The following is a 398-amino-acid chain: Succinate--CoA ligase [ADP-forming] subunit beta (398 aa).

The 246-residue stretch at 9-254 (KAVLREFGVS…ETEEDAKEIE (246 aa)) folds into the ATP-grasp domain. ATP is bound by residues lysine 46, 53–55 (GRG), glutamate 109, alanine 112, and glutamate 117. Positions 209 and 223 each coordinate Mg(2+). Substrate is bound by residues asparagine 274 and 331-333 (GIM).

This sequence belongs to the succinate/malate CoA ligase beta subunit family. Heterotetramer of two alpha and two beta subunits. Requires Mg(2+) as cofactor.

The enzyme catalyses succinate + ATP + CoA = succinyl-CoA + ADP + phosphate. The catalysed reaction is GTP + succinate + CoA = succinyl-CoA + GDP + phosphate. It participates in carbohydrate metabolism; tricarboxylic acid cycle; succinate from succinyl-CoA (ligase route): step 1/1. Functionally, succinyl-CoA synthetase functions in the citric acid cycle (TCA), coupling the hydrolysis of succinyl-CoA to the synthesis of either ATP or GTP and thus represents the only step of substrate-level phosphorylation in the TCA. The beta subunit provides nucleotide specificity of the enzyme and binds the substrate succinate, while the binding sites for coenzyme A and phosphate are found in the alpha subunit. This chain is Succinate--CoA ligase [ADP-forming] subunit beta, found in Afipia carboxidovorans (strain ATCC 49405 / DSM 1227 / KCTC 32145 / OM5) (Oligotropha carboxidovorans).